A 119-amino-acid chain; its full sequence is ATP-dependent Clp protease adapter protein ClpS (119 aa).

The interval 1–24 (MGPESPDSIPPHGPGNGDGDQDLD) is disordered.

The protein belongs to the ClpS family. In terms of assembly, binds to the N-terminal domain of the chaperone ClpA.

Its function is as follows. Involved in the modulation of the specificity of the ClpAP-mediated ATP-dependent protein degradation. The sequence is that of ATP-dependent Clp protease adapter protein ClpS from Gluconobacter oxydans (strain 621H) (Gluconobacter suboxydans).